Reading from the N-terminus, the 190-residue chain is E3 ubiquitin-protein ligase RNF183 (190 aa).

The Cytoplasmic segment spans residues 1–159 (MSEPQGQELR…RECVRNPHFR (159 aa)). The RING-type zinc finger occupies 13–60 (CPVCWNPFNNTFHTPKVLDCCHSFCVECLAHLSLVTPARRRLLCPLCR). The helical; Anchor for type IV membrane protein transmembrane segment at 160–180 (IFAYLMAVILSVTLLLIFSIF) threads the bilayer. Topologically, residues 181–190 (WTKQFFWGMG) are lumenal.

As to quaternary structure, interacts with FATE1. Interacts with SEC16A. Interacts with BCL2L1. Post-translationally, autoubiquitinated (in vitro). Highly expressed in the kidney and testis.

The protein localises to the endoplasmic reticulum membrane. It is found in the endoplasmic reticulum. It localises to the golgi apparatus. Its subcellular location is the cis-Golgi network membrane. The protein resides in the lysosome membrane. It carries out the reaction S-ubiquitinyl-[E2 ubiquitin-conjugating enzyme]-L-cysteine + [acceptor protein]-L-lysine = [E2 ubiquitin-conjugating enzyme]-L-cysteine + N(6)-ubiquitinyl-[acceptor protein]-L-lysine.. Its pathway is protein modification; protein ubiquitination. In terms of biological role, acts as an E3 ubiquitin ligase catalyzing the covalent attachment of ubiquitin moieties onto substrate proteins. Triggers apoptosis in response to prolonged ER stress by mediating the polyubiquitination and subsequent proteasomal degradation of BCL2L1. May collaborate with FATE1 to restrain BIK protein levels thus regulating apoptotic signaling. This Mus musculus (Mouse) protein is E3 ubiquitin-protein ligase RNF183 (Rnf183).